The following is a 67-amino-acid chain: DNA-directed RNA polymerase subunit omega (67 aa).

This sequence belongs to the RNA polymerase subunit omega family. As to quaternary structure, the RNAP catalytic core consists of 2 alpha, 1 beta, 1 beta' and 1 omega subunit. When a sigma factor is associated with the core the holoenzyme is formed, which can initiate transcription.

The enzyme catalyses RNA(n) + a ribonucleoside 5'-triphosphate = RNA(n+1) + diphosphate. Its function is as follows. Promotes RNA polymerase assembly. Latches the N- and C-terminal regions of the beta' subunit thereby facilitating its interaction with the beta and alpha subunits. The polypeptide is DNA-directed RNA polymerase subunit omega (Polynucleobacter asymbioticus (strain DSM 18221 / CIP 109841 / QLW-P1DMWA-1) (Polynucleobacter necessarius subsp. asymbioticus)).